The chain runs to 215 residues: Methylthioribulose-1-phosphate dehydratase (215 aa).

2 residues coordinate Zn(2+): histidine 103 and histidine 105.

Belongs to the aldolase class II family. MtnB subfamily. Zn(2+) is required as a cofactor.

It catalyses the reaction 5-(methylsulfanyl)-D-ribulose 1-phosphate = 5-methylsulfanyl-2,3-dioxopentyl phosphate + H2O. The protein operates within amino-acid biosynthesis; L-methionine biosynthesis via salvage pathway; L-methionine from S-methyl-5-thio-alpha-D-ribose 1-phosphate: step 2/6. Functionally, catalyzes the dehydration of methylthioribulose-1-phosphate (MTRu-1-P) into 2,3-diketo-5-methylthiopentyl-1-phosphate (DK-MTP-1-P). This is Methylthioribulose-1-phosphate dehydratase from Persephonella marina (strain DSM 14350 / EX-H1).